The chain runs to 728 residues: Putative ankyrin repeat protein L271 (728 aa).

ANK repeat units follow at residues 142 to 171 (SDVN…NIKT) and 173 to 198 (IYSA…DIIL). Positions 244–267 (STKSTKSSGSPKSIKPKKSNQNNN) are enriched in low complexity. Residues 244–271 (STKSTKSSGSPKSIKPKKSNQNNNAKIN) are disordered. Positions 292-338 (TVDKMSSAKEQALNVYKEIENMENFILNKINITKKKALDKIKEIENI) form a coiled coil. 8 ANK repeats span residues 358-383 (TNTD…RQGY), 384-414 (DINK…NYEQ), 477-510 (DDLS…NINS), 514-543 (IGRS…DYSF), 547-576 (NGDT…DTKT), 594-626 (DIKT…NVSS), 630-659 (TKKT…NINS), and 663-696 (LGKT…KILI).

In Acanthamoeba polyphaga (Amoeba), this protein is Putative ankyrin repeat protein L271.